We begin with the raw amino-acid sequence, 346 residues long: Protein MelA (346 aa).

2 consecutive VOC domains span residues 12-141 (GIEF…DFEA) and 155-305 (EVDH…IFTK). 3 residues coordinate Fe cation: H158, H237, and E314.

Belongs to the 4HPPD family. Requires Fe cation as cofactor.

Its subcellular location is the cytoplasm. It participates in pigment biosynthesis; melanin biosynthesis. This chain is Protein MelA (melA), found in Shewanella colwelliana (Alteromonas colwelliana).